We begin with the raw amino-acid sequence, 684 residues long: MSAAGILAFAQQGWEQVLAKVKWSVVYLDAACAESLHWSCGSSRLLEAVKGPACHLREFEPQAIGGGAKQPRAVFVLSSPLKGRIVDTLQSIICRSHFQHCVVVTAVSHAVHLTANHVPAAAAAELEGQQPVFEQLEEKLCEWMGNENYTAEVLHVPLFLAPVASHLAFTPAFATLFPLLPQDVHALNSARPDKRRLSSLGEVDATALTPELLLYIRCLVSGLSSLCEHLGVREECFAVGPLSRVIATDLANYAPAKNRKKTATGRASVVFVDRTLDLTGAVGHHGDNLVEKIMSVLPQLPGHTHDVMVNMAELTAVQAVEENQNVIAPGCLAPSNEASAKALWEALLNSKHKEAVMEVRRHLVEAASRENLPIKMSMGRVTPGQLMSYIQLFKNNLRALRNHCGLLQLGMATVQTLKHPQTAKWDNFLAFERLLLQSLGDSTMAGVLNQLLPMIKSSSQRTSDDLNPEELLILLIYIYSVPGDVTLDRDLGDVEEKVKKALAHVLSEESELSPLLQKITGCDSAVDLTLPKSQIAVNDVFMALREIAGARNLMRQFKSVYVPGNNTHQASYKPLLKQVVEEIFNPEKSDPIDIEHMSSGLTDLLKTGFSMFMKVSRPHPSDHPLLILFVVGGVTVAEAKMVKDLVASLKPGTQVMVLSTRLLKPLNIPELLFATDRLHPDLGF.

This sequence belongs to the STXBP/unc-18/SEC1 family.

Its function is as follows. May be involved in protein transport. This chain is Sec1 family domain-containing protein 2 (Scfd2), found in Mus musculus (Mouse).